A 147-amino-acid polypeptide reads, in one-letter code: MKEETFYLVREDVLPDAMRKTLEVKKLLDRKKADSVADAVQQADLSRSAFYKYRDAVFPFYTMVKEQIITLFFHLEDRSGALSRLLQIVADSGCNVLSIHQTIPLQGRANVTLSISTAGMADDINTVMNQLRKLEFVEKVEILGSGA.

Positions 70–145 (TLFFHLEDRS…FVEKVEILGS (76 aa)) constitute an ACT domain.

It belongs to the UPF0735 family.

The polypeptide is UPF0735 ACT domain-containing protein BPUM_2431 (Bacillus pumilus (strain SAFR-032)).